An 89-amino-acid chain; its full sequence is Small ribosomal subunit protein bS16c (89 aa).

This sequence belongs to the bacterial ribosomal protein bS16 family.

Its subcellular location is the plastid. The protein resides in the chloroplast. This Glycine max (Soybean) protein is Small ribosomal subunit protein bS16c.